Reading from the N-terminus, the 832-residue chain is Polyphosphoinositide phosphatase (832 aa).

The 347-residue stretch at 145–491 (IEKVDLARTF…GDAIALQYGG (347 aa)) folds into the SAC domain.

In terms of assembly, component of the PI(3,5)P2 regulatory complex. Mg(2+) serves as cofactor.

It is found in the cytoplasm. The protein localises to the vacuole membrane. It catalyses the reaction a 1,2-diacyl-sn-glycero-3-phospho-(1D-myo-inositol-3,5-bisphosphate) + H2O = a 1,2-diacyl-sn-glycero-3-phospho-(1D-myo-inositol-3-phosphate) + phosphate. Functionally, the PI(3,5)P2 regulatory complex regulates both the synthesis and turnover of phosphatidylinositol 3,5-bisphosphate (PtdIns(3,5)P2). This is Polyphosphoinositide phosphatase from Schizosaccharomyces pombe (strain 972 / ATCC 24843) (Fission yeast).